The primary structure comprises 781 residues: Poly(ADP-ribose) glycohydrolase 1 (781 aa).

3 disordered regions span residues 28 to 87 (AHQV…VSEN), 102 to 131 (SLDN…NNKS), and 206 to 232 (ADST…DADS). The span at 106 to 121 (VTERSEHTLDNHKSTE) shows a compositional bias: basic and acidic residues.

This sequence belongs to the poly(ADP-ribose) glycohydrolase family. Expressed in head and tail neurons. Also detected in the central nerve cord and motor neurons.

Its subcellular location is the nucleus. It catalyses the reaction [(1''-&gt;2')-ADP-alpha-D-ribose](n) + H2O = [(1''-&gt;2')-ADP-alpha-D-ribose](n-1) + ADP-D-ribose. In terms of biological role, poly(ADP-ribose) synthesized after DNA damage is only present transiently and is rapidly degraded by poly(ADP-ribose) glycohydrolase. Poly(ADP-ribose) metabolism may be required for maintenance of the normal function of neuronal cells. This Caenorhabditis elegans protein is Poly(ADP-ribose) glycohydrolase 1.